The primary structure comprises 435 residues: MSTPHINVIGAGLAGSEAAWQIAERGIAVHLYEMRPVKQTPAHHTDKFAELVCSNSLRGNSLTNAVGVLKEEMRRLNSVIIRSADRCSVPAGGALAVDRHEFAQAVTEAVREHPNVTVFTEEIQKIPDGPTVIATGPLTSKALSEQLKQLTGEEYLYFYDAAAPIIETDSINMDKVYLKSRYDKGEAAYLNCPMTEEEFDRFYEALISAETVPLKEFEKEVFFEGCMPVEVMAKRGKKTLLFGPMKPVGLEDPKTGKRPYAVVQLRRDNQSGTLYNIVGFQTHLKWGPQKEVIQLIPGLENAEIVRYGVMHRNTFINSPNLLKPTYQYKKRKDLFFAGQITGVEGYVESAAAGLVAGLNAARLVQSKELVVFPDTTMLGSMANYITTANSKNFQPMNANFGLLPPLDTRIKDKKTRYETLAGRALESIQNFVKKM.

Residue 10–15 coordinates FAD; sequence GAGLAG.

This sequence belongs to the MnmG family. TrmFO subfamily. FAD serves as cofactor.

Its subcellular location is the cytoplasm. The enzyme catalyses uridine(54) in tRNA + (6R)-5,10-methylene-5,6,7,8-tetrahydrofolate + NADH + H(+) = 5-methyluridine(54) in tRNA + (6S)-5,6,7,8-tetrahydrofolate + NAD(+). The catalysed reaction is uridine(54) in tRNA + (6R)-5,10-methylene-5,6,7,8-tetrahydrofolate + NADPH + H(+) = 5-methyluridine(54) in tRNA + (6S)-5,6,7,8-tetrahydrofolate + NADP(+). Its function is as follows. Catalyzes the folate-dependent formation of 5-methyl-uridine at position 54 (M-5-U54) in all tRNAs. The protein is Methylenetetrahydrofolate--tRNA-(uracil-5-)-methyltransferase TrmFO of Halalkalibacterium halodurans (strain ATCC BAA-125 / DSM 18197 / FERM 7344 / JCM 9153 / C-125) (Bacillus halodurans).